The chain runs to 355 residues: Homeobox protein knotted-1-like LET6 (355 aa).

Positions Pro-75–Ile-96 are disordered. A compositionally biased stretch (low complexity) spans Asn-79–Ile-96. Residues Glu-237–Phe-257 form the ELK domain. The segment at residues Met-258–Ser-321 is a DNA-binding region (homeobox; TALE-type).

This sequence belongs to the TALE/KNOX homeobox family. As to expression, expressed in developing lateral organs and developing ovaries in flowers.

The protein localises to the nucleus. Functionally, may have a role to play in formative events in ovule and embryo morphogenesis. Probably binds to the DNA sequence 5'-TGAC-3'. This chain is Homeobox protein knotted-1-like LET6 (LET6), found in Solanum lycopersicum (Tomato).